A 670-amino-acid chain; its full sequence is Polar flagellar hook-associated protein 2 (670 aa).

The tract at residues 226-300 is disordered; sequence PLQAPQQPDQ…RSSLRPEERI (75 aa). Acidic residues predominate over residues 257–266; sequence AQDDAQDDAS. Positions 272 to 283 are enriched in low complexity; sequence AAGAEAAKAGQE. Over residues 284–300 the composition is skewed to basic and acidic residues; the sequence is AIDKANQRSSLRPEERI. Residues 342–428 are a coiled coil; the sequence is GTLTDSYVTT…AQSSFEEYLG (87 aa).

This sequence belongs to the FliD family. As to quaternary structure, homopentamer.

The protein localises to the secreted. It localises to the bacterial flagellum. Functionally, required for the morphogenesis and for the elongation of the flagellar filament by facilitating polymerization of the flagellin monomers at the tip of growing filament. Forms a capping structure, which prevents flagellin subunits (transported through the central channel of the flagellum) from leaking out without polymerization at the distal end. Important for swimming motility. This chain is Polar flagellar hook-associated protein 2 (fliDP), found in Vibrio parahaemolyticus serotype O3:K6 (strain RIMD 2210633).